A 156-amino-acid chain; its full sequence is MNLNATILGQAIAFVLFVLFCMKYVWPPIMAAIEKRQKEIADGLSSAERAKKDLDLAKADAGEQLAKAKAEAQAIIESANKQRTQMIEEAKAEAEQERSKIVAQAQSELEAERKRAREELRKQVAMLAIAGAEKIIERSVDEAANSDIVDKLVAEL.

Residues 11 to 31 traverse the membrane as a helical segment; the sequence is AIAFVLFVLFCMKYVWPPIMA.

The protein belongs to the ATPase B chain family. In terms of assembly, F-type ATPases have 2 components, F(1) - the catalytic core - and F(0) - the membrane proton channel. F(1) has five subunits: alpha(3), beta(3), gamma(1), delta(1), epsilon(1). F(0) has three main subunits: a(1), b(2) and c(10-14). The alpha and beta chains form an alternating ring which encloses part of the gamma chain. F(1) is attached to F(0) by a central stalk formed by the gamma and epsilon chains, while a peripheral stalk is formed by the delta and b chains.

It is found in the cell inner membrane. F(1)F(0) ATP synthase produces ATP from ADP in the presence of a proton or sodium gradient. F-type ATPases consist of two structural domains, F(1) containing the extramembraneous catalytic core and F(0) containing the membrane proton channel, linked together by a central stalk and a peripheral stalk. During catalysis, ATP synthesis in the catalytic domain of F(1) is coupled via a rotary mechanism of the central stalk subunits to proton translocation. Its function is as follows. Component of the F(0) channel, it forms part of the peripheral stalk, linking F(1) to F(0). The chain is ATP synthase subunit b from Proteus mirabilis (strain HI4320).